The chain runs to 155 residues: Desiccation-related protein clone PCC6-19 (155 aa).

Residues 1–155 (MAQFGGEKYG…IKEKLPGGQH (155 aa)) form a disordered region. Composition is skewed to gly residues over residues 27 to 39 (AHRG…GGQQ) and 47 to 76 (GVLG…GALG). Residues 83-92 (GSSSSSSSSE) are compositionally biased toward low complexity. Positions 118-135 (TTTDQQQYGTAATHGQAQ) are enriched in polar residues. Residues 136–155 (QHEKKGIMDKIKEKLPGGQH) show a composition bias toward basic and acidic residues.

It belongs to the plant dehydrin family.

The polypeptide is Desiccation-related protein clone PCC6-19 (Craterostigma plantagineum (Blue gem)).